The following is a 303-amino-acid chain: Sulfate adenylyltransferase subunit 2 (303 aa).

The tract at residues 281 to 303 is disordered; it reads RQGRVIDHDSSGSMEKKKQEGYF.

It belongs to the PAPS reductase family. CysD subfamily. As to quaternary structure, heterodimer composed of CysD, the smaller subunit, and CysN.

The catalysed reaction is sulfate + ATP + H(+) = adenosine 5'-phosphosulfate + diphosphate. It functions in the pathway sulfur metabolism; hydrogen sulfide biosynthesis; sulfite from sulfate: step 1/3. Functionally, with CysN forms the ATP sulfurylase (ATPS) that catalyzes the adenylation of sulfate producing adenosine 5'-phosphosulfate (APS) and diphosphate, the first enzymatic step in sulfur assimilation pathway. APS synthesis involves the formation of a high-energy phosphoric-sulfuric acid anhydride bond driven by GTP hydrolysis by CysN coupled to ATP hydrolysis by CysD. The protein is Sulfate adenylyltransferase subunit 2 of Saccharophagus degradans (strain 2-40 / ATCC 43961 / DSM 17024).